Consider the following 284-residue polypeptide: Tropomyosin alpha-1 chain (284 aa).

M1 is subject to N-acetylmethionine. Residues M1 to E40 are disordered. Positions M1 to I284 form a coiled coil. Positions K12–E40 are enriched in basic and acidic residues.

In terms of assembly, homodimer. Heterodimer of an alpha (TPM1, TPM3 or TPM4) and a beta (TPM2) chain.

The protein localises to the cytoplasm. It localises to the cytoskeleton. Its function is as follows. Binds to actin filaments in muscle and non-muscle cells. Plays a central role, in association with the troponin complex, in the calcium dependent regulation of vertebrate striated muscle contraction. Smooth muscle contraction is regulated by interaction with caldesmon. In non-muscle cells is implicated in stabilizing cytoskeleton actin filaments. This Chelon auratus (Golden grey mullet) protein is Tropomyosin alpha-1 chain.